The following is a 346-amino-acid chain: Uroporphyrinogen decarboxylase (346 aa).

Residues 26-30 (RQAGR), D76, Y153, S208, and H323 each bind substrate.

It belongs to the uroporphyrinogen decarboxylase family. Homodimer.

The protein resides in the cytoplasm. The enzyme catalyses uroporphyrinogen III + 4 H(+) = coproporphyrinogen III + 4 CO2. It participates in porphyrin-containing compound metabolism; protoporphyrin-IX biosynthesis; coproporphyrinogen-III from 5-aminolevulinate: step 4/4. Its function is as follows. Catalyzes the decarboxylation of four acetate groups of uroporphyrinogen-III to yield coproporphyrinogen-III. The protein is Uroporphyrinogen decarboxylase of Prochlorococcus marinus (strain AS9601).